A 422-amino-acid chain; its full sequence is Probable FBD-associated F-box protein At1g32375 (422 aa).

One can recognise an F-box domain in the interval 1–53 (MDKLSQLPEALLVRILSLLSAKDVVSTMVLSKRWQFLWMLVPKLIYDDSYQAI). The FBD domain occupies 342-392 (CWNEPSAVPECLLTSLETLEWVKYEGTEEEKEVAAFILRSGSCLKKVTISS).

This is Probable FBD-associated F-box protein At1g32375 from Arabidopsis thaliana (Mouse-ear cress).